Reading from the N-terminus, the 506-residue chain is MASQQAPAKDLQTNNLEFTPTDSSGVQWAEDISNSPSAQLNFSPSNNGCWATQELQSLWKMFNSWLQPEKQTKEQMISQLVLEQFLLTGHCKDKYALTEKWKASGSDMRRFMESLTDECLKPPVMVHVSMQGQEALFSENMPLKEVIKLLKQQQSATRPTPDNEQMPVDTTQDRLLATGQENSENECNNSCNATEANVGESCSGNEMDSLLIIQKEQHPEHEEGNVVCQFPHGARRASQGTPSHHVDFPSAPTTADVPMEEQPKDLSRENISEDKNNCYNTSRNAATQVYSGDNIPRNKSDSLFINKRIYHPEPEVGDIPYGVPQDSTRASQGTSTCLQESLGECFSENDPREVPGLQSRQEQPISDPVLLGKNHEANLPCESHQKRFCRDAKLYKCEECSRMFKHARSLSSHQRTHLNKKSELLCVTCQKMFKRVSDRRTHEIIHMPEKPFKCSTCEKSFSHKTNLKSHEMIHTGEMPYVCSLCSRRFRQSSTYHRHLRNYHRSD.

Residues 1–24 (MASQQAPAKDLQTNNLEFTPTDSS) are disordered. An SCAN box domain is found at 37–119 (SAQLNFSPSN…RFMESLTDEC (83 aa)). 4 consecutive C2H2-type zinc fingers follow at residues 395–417 (YKCE…QRTH), 424–446 (LLCV…EIIH), 452–474 (FKCS…EMIH), and 480–503 (YVCS…RNYH).

As to expression, embryonic stem (ES) cell-specific. Expressed in only 5% of ES cells at a given time, but nearly all ES cells express it at least once during 9 passages.

The protein localises to the nucleus. It localises to the chromosome. Its subcellular location is the telomere. Its function is as follows. Embryonic stem (ES) cell-specific transcription factor required to regulate ES cell pluripotency. Binds telomeres and plays a key role in genomic stability in ES cells by regulating telomere elongation. Acts as an activator of spontaneous telomere sister chromatid exchange (T-SCE) and telomere elongation in undifferentiated ES cells. The sequence is that of Zinc finger and SCAN domain containing protein 4C (Zscan4c) from Mus musculus (Mouse).